The chain runs to 335 residues: Putative peroxisomal biogenesis factor 19 (335 aa).

Disordered stretches follow at residues 14–70 (LETQ…LGND) and 104–124 (YNKD…PSEE). Low complexity-rich tracts occupy residues 22 to 55 (PTTT…PSTI) and 109 to 119 (NNNSDDSNNGG).

Belongs to the peroxin-19 family.

It is found in the peroxisome. This chain is Putative peroxisomal biogenesis factor 19 (pex19), found in Dictyostelium discoideum (Social amoeba).